The following is a 63-amino-acid chain: Venom peptide U-reduvitoxin-Pp19 (63 aa).

Residues 1 to 23 (MSPYSILFVVVIALCLLPESIVG) form the signal peptide. 3 disulfides stabilise this stretch: C15–C62, C25–C53, and C30–C61.

As to expression, hemolymph (at protein level). Also weakly expressed by the venom gland (at protein level).

Its subcellular location is the secreted. In terms of biological role, toxin with insecticidal activity. High doses of recombinant toxin causes impaired motor behavior of D.melanogaster, which progress slowly to paralysis and death after several hours. In Pristhesancus plagipennis (Common assassin bug), this protein is Venom peptide U-reduvitoxin-Pp19.